Reading from the N-terminus, the 185-residue chain is Ribosome-recycling factor (185 aa).

Belongs to the RRF family.

It is found in the cytoplasm. Its function is as follows. Responsible for the release of ribosomes from messenger RNA at the termination of protein biosynthesis. May increase the efficiency of translation by recycling ribosomes from one round of translation to another. This chain is Ribosome-recycling factor, found in Clostridium novyi (strain NT).